The primary structure comprises 768 residues: DNA ligase (768 aa).

Residues 61–65, 110–111, and Glu146 contribute to the NAD(+) site; these read DAEFD and SL. The active-site N6-AMP-lysine intermediate is Lys148. NAD(+) contacts are provided by Arg169, Glu206, Lys322, and Lys346. 4 residues coordinate Zn(2+): Cys443, Cys446, Cys462, and Cys468. Positions 661–750 constitute a BRCT domain; it reads SVPRTLEGLT…PAQTGTEAEA (90 aa). The disordered stretch occupies residues 739–768; that stretch reads NGPAQTGTEAEAATDEATVVDETAAEAATE. Low complexity predominate over residues 746–768; the sequence is TEAEAATDEATVVDETAAEAATE.

This sequence belongs to the NAD-dependent DNA ligase family. LigA subfamily. The cofactor is Mg(2+). Mn(2+) serves as cofactor.

The enzyme catalyses NAD(+) + (deoxyribonucleotide)n-3'-hydroxyl + 5'-phospho-(deoxyribonucleotide)m = (deoxyribonucleotide)n+m + AMP + beta-nicotinamide D-nucleotide.. DNA ligase that catalyzes the formation of phosphodiester linkages between 5'-phosphoryl and 3'-hydroxyl groups in double-stranded DNA using NAD as a coenzyme and as the energy source for the reaction. It is essential for DNA replication and repair of damaged DNA. This Paenarthrobacter aurescens (strain TC1) protein is DNA ligase.